The sequence spans 27 residues: U1-poneritoxin-Na3b (27 aa).

Belongs to the ponericin-G family. Expressed by the venom gland.

The protein localises to the secreted. Shows a broad spectrum of activity against both Gram-positive and Gram-negative bacteria. Also has antimicrobial activity against S.cerevisiae. Has insecticidal and non-hemolytic activity. The chain is U1-poneritoxin-Na3b from Neoponera apicalis (Ant).